The primary structure comprises 292 residues: Secreted frizzled-related protein 2 (292 aa).

The N-terminal stretch at 1-20 (MPRRLCALLLLASQCLGSTA) is a signal peptide. Residues 32–152 (YKRSNCKPIP…PKDNDLCIPL (121 aa)) form the FZ domain. 7 disulfide bridges follow: cysteine 37/cysteine 100, cysteine 47/cysteine 93, cysteine 84/cysteine 122, cysteine 111/cysteine 149, cysteine 115/cysteine 139, cysteine 169/cysteine 242, and cysteine 187/cysteine 292. The region spanning 169-292 (CDACKNKNED…FSRSIRKLQC (124 aa)) is the NTR domain.

Belongs to the secreted frizzled-related protein (sFRP) family.

The protein localises to the secreted. Soluble frizzled-related proteins (sFRPS) function as modulators of Wnt signaling through direct interaction with Wnts. They have a role in regulating cell growth and differentiation in specific cell types. SFRP2 appears to be associated with myogenesis. This is Secreted frizzled-related protein 2 (SFRP2) from Gallus gallus (Chicken).